A 562-amino-acid chain; its full sequence is Arf-GAP domain and FG repeat-containing protein 1 (562 aa).

The region spanning 11 to 135 (EKHLKMLRDM…WYVPPEQAKV (125 aa)) is the Arf-GAP domain. The C4-type zinc-finger motif lies at 29 to 52 (CFDCDQRGPTYVNMTVGSFVCTSC). The segment at 145-193 (GSSASSTSSTPEVKPLKSLLGDSAPTLHLNKGTPSQSPVVGRSQGQQQE) is disordered. S167 is modified (phosphoserine). Over residues 176 to 191 (GTPSQSPVVGRSQGQQ) the composition is skewed to polar residues. Phosphothreonine is present on T177. S181 and S362 each carry phosphoserine. S367 carries O-linked (GlcNAc) serine glycosylation.

In terms of assembly, interacts with EPS15R and EPS15. Interacts with FCHO1. Post-translationally, O-glycosylated. In terms of tissue distribution, ubiquitously expressed.

The protein resides in the nucleus. Its subcellular location is the cytoplasmic vesicle. Functionally, required for vesicle docking or fusion during acrosome biogenesis. May play a role in RNA trafficking or localization. In case of infection by HIV-1, acts as a cofactor for viral Rev and promotes movement of Rev-responsive element-containing RNAs from the nuclear periphery to the cytoplasm. This step is essential for HIV-1 replication. The chain is Arf-GAP domain and FG repeat-containing protein 1 (AGFG1) from Homo sapiens (Human).